Consider the following 420-residue polypeptide: 5'-deoxyadenosine deaminase (420 aa).

The Zn(2+) site is built by His-55 and His-57. 2 residues coordinate substrate: Glu-84 and His-176. Residue His-203 coordinates Zn(2+). Substrate contacts are provided by Glu-206 and Asp-292. Asp-292 is a binding site for Zn(2+).

This sequence belongs to the metallo-dependent hydrolases superfamily. MTA/SAH deaminase family. As to quaternary structure, homotetramer. It depends on Zn(2+) as a cofactor.

It catalyses the reaction 5'-deoxyadenosine + H2O + H(+) = 5'-deoxyinosine + NH4(+). It carries out the reaction S-adenosyl-L-homocysteine + H2O + H(+) = S-inosyl-L-homocysteine + NH4(+). The catalysed reaction is S-methyl-5'-thioadenosine + H2O + H(+) = S-methyl-5'-thioinosine + NH4(+). The enzyme catalyses adenosine + H2O + H(+) = inosine + NH4(+). It functions in the pathway amino-acid biosynthesis; S-adenosyl-L-methionine biosynthesis. Functionally, catalyzes the deamination of three SAM-derived enzymatic products, namely 5'-deoxyadenosine, S-adenosyl-L-homocysteine, and 5'-methylthioadenosine, to produce the inosine analogs. Can also deaminate adenosine. The preferred substrate for this enzyme is 5'-deoxyadenosine, but all these substrates are efficiently deaminated. Likely functions in a S-adenosyl-L-methionine (SAM) recycling pathway from S-adenosyl-L-homocysteine (SAH) produced from SAM-dependent methylation reactions. May also be involved in the recycling of 5'-deoxyadenosine, whereupon the 5'-deoxyribose moiety of 5'-deoxyinosine is further metabolized to deoxyhexoses used for the biosynthesis of aromatic amino acids in methanogens. This chain is 5'-deoxyadenosine deaminase, found in Methanocaldococcus jannaschii (strain ATCC 43067 / DSM 2661 / JAL-1 / JCM 10045 / NBRC 100440) (Methanococcus jannaschii).